Here is a 274-residue protein sequence, read N- to C-terminus: Probable endonuclease LCL3 (274 aa).

The helical transmembrane segment at 15–32 (AVLSIILTGSTLTLIYTY) threads the bilayer. Positions 53–261 (HWLYGKVTSV…RSRKKGLWIQ (209 aa)) constitute a TNase-like domain. R151 is a catalytic residue. Position 156 (D156) interacts with Ca(2+). Active-site residues include E159 and R199.

It belongs to the LCL3 family.

The protein localises to the mitochondrion. It localises to the membrane. This Saccharomyces cerevisiae (strain Lalvin EC1118 / Prise de mousse) (Baker's yeast) protein is Probable endonuclease LCL3 (LCL3).